Consider the following 197-residue polypeptide: Elongation factor Ts (197 aa).

The tract at residues 81–84 (TDFV) is involved in Mg(2+) ion dislocation from EF-Tu.

Belongs to the EF-Ts family.

Its subcellular location is the cytoplasm. In terms of biological role, associates with the EF-Tu.GDP complex and induces the exchange of GDP to GTP. It remains bound to the aminoacyl-tRNA.EF-Tu.GTP complex up to the GTP hydrolysis stage on the ribosome. The chain is Elongation factor Ts from Sulfurihydrogenibium sp. (strain YO3AOP1).